Reading from the N-terminus, the 117-residue chain is Large ribosomal subunit protein bL20 (117 aa).

Belongs to the bacterial ribosomal protein bL20 family.

Its function is as follows. Binds directly to 23S ribosomal RNA and is necessary for the in vitro assembly process of the 50S ribosomal subunit. It is not involved in the protein synthesizing functions of that subunit. This Chromohalobacter salexigens (strain ATCC BAA-138 / DSM 3043 / CIP 106854 / NCIMB 13768 / 1H11) protein is Large ribosomal subunit protein bL20.